The sequence spans 89 residues: Ixosin-B (89 aa).

Positions M1–A26 are cleaved as a signal peptide. The propeptide occupies S27–G57. A disordered region spans residues S68 to Y89. Basic and acidic residues predominate over residues S76–Y89.

Has antifungal activity against C.albicans. Has antibacterial activity against the Gram-positive bacterium S.aureus and the Gram-negative bacterium E.coli. Lacks hemolytic activity against rabbit erythrocytes. This is Ixosin-B from Ixodes sinensis (Hard tick).